The chain runs to 219 residues: Thiamine-phosphate synthase (219 aa).

Residues 48-52 (QFRQK) and asparagine 84 contribute to the 4-amino-2-methyl-5-(diphosphooxymethyl)pyrimidine site. 2 residues coordinate Mg(2+): aspartate 85 and aspartate 104. Residue serine 123 coordinates 4-amino-2-methyl-5-(diphosphooxymethyl)pyrimidine. 150–152 (TPS) contributes to the 2-[(2R,5Z)-2-carboxy-4-methylthiazol-5(2H)-ylidene]ethyl phosphate binding site. A 4-amino-2-methyl-5-(diphosphooxymethyl)pyrimidine-binding site is contributed by lysine 153. 2-[(2R,5Z)-2-carboxy-4-methylthiazol-5(2H)-ylidene]ethyl phosphate-binding positions include glycine 181 and 199–200 (IS).

The protein belongs to the thiamine-phosphate synthase family. It depends on Mg(2+) as a cofactor.

It catalyses the reaction 2-[(2R,5Z)-2-carboxy-4-methylthiazol-5(2H)-ylidene]ethyl phosphate + 4-amino-2-methyl-5-(diphosphooxymethyl)pyrimidine + 2 H(+) = thiamine phosphate + CO2 + diphosphate. The enzyme catalyses 2-(2-carboxy-4-methylthiazol-5-yl)ethyl phosphate + 4-amino-2-methyl-5-(diphosphooxymethyl)pyrimidine + 2 H(+) = thiamine phosphate + CO2 + diphosphate. The catalysed reaction is 4-methyl-5-(2-phosphooxyethyl)-thiazole + 4-amino-2-methyl-5-(diphosphooxymethyl)pyrimidine + H(+) = thiamine phosphate + diphosphate. It functions in the pathway cofactor biosynthesis; thiamine diphosphate biosynthesis; thiamine phosphate from 4-amino-2-methyl-5-diphosphomethylpyrimidine and 4-methyl-5-(2-phosphoethyl)-thiazole: step 1/1. Its function is as follows. Condenses 4-methyl-5-(beta-hydroxyethyl)thiazole monophosphate (THZ-P) and 2-methyl-4-amino-5-hydroxymethyl pyrimidine pyrophosphate (HMP-PP) to form thiamine monophosphate (TMP). The sequence is that of Thiamine-phosphate synthase from Helicobacter pylori (strain ATCC 700392 / 26695) (Campylobacter pylori).